The following is a 411-amino-acid chain: Probable tRNA pseudouridine synthase D (411 aa).

Asp-81 serves as the catalytic Nucleophile. The 222-residue stretch at 154–375 (GTPNFFGLQR…SGSYRPADTL (222 aa)) folds into the TRUD domain.

This sequence belongs to the pseudouridine synthase TruD family.

The enzyme catalyses uridine(13) in tRNA = pseudouridine(13) in tRNA. Its function is as follows. Could be responsible for synthesis of pseudouridine from uracil-13 in transfer RNAs. This is Probable tRNA pseudouridine synthase D from Archaeoglobus fulgidus (strain ATCC 49558 / DSM 4304 / JCM 9628 / NBRC 100126 / VC-16).